A 509-amino-acid chain; its full sequence is Histidine ammonia-lyase (509 aa).

Positions 142–144 (ASG) form a cross-link, 5-imidazolinone (Ala-Gly). Ser-143 carries the post-translational modification 2,3-didehydroalanine (Ser).

Belongs to the PAL/histidase family. In terms of processing, contains an active site 4-methylidene-imidazol-5-one (MIO), which is formed autocatalytically by cyclization and dehydration of residues Ala-Ser-Gly.

It localises to the cytoplasm. The enzyme catalyses L-histidine = trans-urocanate + NH4(+). It participates in amino-acid degradation; L-histidine degradation into L-glutamate; N-formimidoyl-L-glutamate from L-histidine: step 1/3. The polypeptide is Histidine ammonia-lyase (Pseudomonas aeruginosa (strain UCBPP-PA14)).